The primary structure comprises 428 residues: uncharacterized protein (428 aa).

3 disordered regions span residues 1 to 25 (MRDN…PTRT), 157 to 219 (DTAK…TEQV), and 247 to 271 (DFGT…PWRP). The span at 12–22 (GSESQQTTYDP) shows a compositional bias: polar residues. The segment covering 157–171 (DTAKSNEKLQGDESK) has biased composition (basic and acidic residues). Residues 172 to 186 (SSNGSSSTSTTTQRG) are compositionally biased toward low complexity. A compositionally biased stretch (polar residues) spans 206-217 (GSQGNSGEQGTE).

This sequence belongs to the adhesin P1 family.

This is an uncharacterized protein from Mycoplasma pneumoniae (strain ATCC 29342 / M129 / Subtype 1) (Mycoplasmoides pneumoniae).